The chain runs to 263 residues: 4-hydroxy-tetrahydrodipicolinate reductase (263 aa).

An NAD(+)-binding site is contributed by 10–15; sequence GASGKM. NADP(+) is bound at residue arginine 38. NAD(+)-binding positions include 97–99 and 123–126; these read GTT and APNF. Residue histidine 153 is the Proton donor/acceptor of the active site. Histidine 154 provides a ligand contact to (S)-2,3,4,5-tetrahydrodipicolinate. Lysine 157 (proton donor) is an active-site residue. 163 to 164 provides a ligand contact to (S)-2,3,4,5-tetrahydrodipicolinate; it reads GT.

This sequence belongs to the DapB family.

The protein localises to the cytoplasm. The catalysed reaction is (S)-2,3,4,5-tetrahydrodipicolinate + NAD(+) + H2O = (2S,4S)-4-hydroxy-2,3,4,5-tetrahydrodipicolinate + NADH + H(+). It carries out the reaction (S)-2,3,4,5-tetrahydrodipicolinate + NADP(+) + H2O = (2S,4S)-4-hydroxy-2,3,4,5-tetrahydrodipicolinate + NADPH + H(+). The protein operates within amino-acid biosynthesis; L-lysine biosynthesis via DAP pathway; (S)-tetrahydrodipicolinate from L-aspartate: step 4/4. Its function is as follows. Catalyzes the conversion of 4-hydroxy-tetrahydrodipicolinate (HTPA) to tetrahydrodipicolinate. The polypeptide is 4-hydroxy-tetrahydrodipicolinate reductase (Dehalococcoides mccartyi (strain ATCC BAA-2100 / JCM 16839 / KCTC 5957 / BAV1)).